A 377-amino-acid polypeptide reads, in one-letter code: Aspartate aminotransferase (377 aa).

Residues Gly37, Trp123, and Asn173 each contribute to the L-aspartate site. Lys234 carries the N6-(pyridoxal phosphate)lysine modification. Arg353 provides a ligand contact to L-aspartate.

The protein belongs to the class-I pyridoxal-phosphate-dependent aminotransferase family. As to quaternary structure, homodimer. The cofactor is pyridoxal 5'-phosphate.

The protein localises to the cytoplasm. It catalyses the reaction L-aspartate + 2-oxoglutarate = oxaloacetate + L-glutamate. This Thermotoga maritima (strain ATCC 43589 / DSM 3109 / JCM 10099 / NBRC 100826 / MSB8) protein is Aspartate aminotransferase (aspC).